The primary structure comprises 114 residues: Fumarate reductase subunit D (114 aa).

Helical transmembrane passes span 24-44 (ISAL…PLGI), 49-69 (GIIA…LTIF), and 94-114 (LIFY…VASI).

This sequence belongs to the FrdD family. In terms of assembly, part of an enzyme complex containing four subunits: a flavoprotein (FrdA), an iron-sulfur protein (FrdB), and two hydrophobic anchor proteins (FrdC and FrdD).

It localises to the cell inner membrane. In terms of biological role, anchors the catalytic components of the fumarate reductase complex to the cell membrane, binds quinones. The chain is Fumarate reductase subunit D from Actinobacillus succinogenes (strain ATCC 55618 / DSM 22257 / CCUG 43843 / 130Z).